We begin with the raw amino-acid sequence, 285 residues long: Bifunctional protein FolD (285 aa).

Residues 166-168 (GAS) and I232 contribute to the NADP(+) site.

The protein belongs to the tetrahydrofolate dehydrogenase/cyclohydrolase family. In terms of assembly, homodimer.

It carries out the reaction (6R)-5,10-methylene-5,6,7,8-tetrahydrofolate + NADP(+) = (6R)-5,10-methenyltetrahydrofolate + NADPH. The catalysed reaction is (6R)-5,10-methenyltetrahydrofolate + H2O = (6R)-10-formyltetrahydrofolate + H(+). It functions in the pathway one-carbon metabolism; tetrahydrofolate interconversion. In terms of biological role, catalyzes the oxidation of 5,10-methylenetetrahydrofolate to 5,10-methenyltetrahydrofolate and then the hydrolysis of 5,10-methenyltetrahydrofolate to 10-formyltetrahydrofolate. The sequence is that of Bifunctional protein FolD from Buchnera aphidicola subsp. Schizaphis graminum (strain Sg).